The primary structure comprises 210 residues: Small ribosomal subunit protein uS3 (210 aa).

Residues 17 to 86 (IDEFLEKELR…NPQIEVEEIK (70 aa)) enclose the KH type-2 domain.

It belongs to the universal ribosomal protein uS3 family. In terms of assembly, part of the 30S ribosomal subunit.

Binds the lower part of the 30S subunit head. The polypeptide is Small ribosomal subunit protein uS3 (Pyrococcus furiosus (strain ATCC 43587 / DSM 3638 / JCM 8422 / Vc1)).